Reading from the N-terminus, the 388-residue chain is Chorismate synthase (388 aa).

Residues R39 and R45 each contribute to the NADP(+) site. The interval 95 to 118 (EKNEKSRRVSRPRPGHADLVGGMK) is disordered. FMN contacts are provided by residues 130 to 132 (RSS), 251 to 252 (NA), G296, 311 to 315 (KPIPT), and R337.

It belongs to the chorismate synthase family. Homotetramer. It depends on FMNH2 as a cofactor.

The enzyme catalyses 5-O-(1-carboxyvinyl)-3-phosphoshikimate = chorismate + phosphate. It participates in metabolic intermediate biosynthesis; chorismate biosynthesis; chorismate from D-erythrose 4-phosphate and phosphoenolpyruvate: step 7/7. Functionally, catalyzes the anti-1,4-elimination of the C-3 phosphate and the C-6 proR hydrogen from 5-enolpyruvylshikimate-3-phosphate (EPSP) to yield chorismate, which is the branch point compound that serves as the starting substrate for the three terminal pathways of aromatic amino acid biosynthesis. This reaction introduces a second double bond into the aromatic ring system. This is Chorismate synthase from Listeria welshimeri serovar 6b (strain ATCC 35897 / DSM 20650 / CCUG 15529 / CIP 8149 / NCTC 11857 / SLCC 5334 / V8).